Reading from the N-terminus, the 51-residue chain is Large ribosomal subunit protein bL33 (51 aa).

It belongs to the bacterial ribosomal protein bL33 family.

This Idiomarina loihiensis (strain ATCC BAA-735 / DSM 15497 / L2-TR) protein is Large ribosomal subunit protein bL33.